Reading from the N-terminus, the 450-residue chain is MKTVTEFQNKNILVLGIAKSGYAAATLLQKLGANVIVNDGKPLAENVLAAELQAKGMDVVCGGHPLELLERNISLVVKNPGIPYSNPILVAAKEKQIPIVTEVELAYRISEAPFVGITGSNGKTTTTMLTFEMLKEGQKHPVIAGNIGTVACEVAQDAKENEVVVTELSSFQLMGVELFQPKIAAFLNLFEAHLDYHGTKKEYGLAKANIFKNQTENDYSVINADDADVMALSAYSKGQKILFSTTKEIEDGACIKDNALYFKGEKVVEVSDIVLPGQHNLENILAAMSIAKLLGTSNEAITVVLKRFTGVKHRLEYVTTINNRKFYNDSKATNMLATEKALSAFTQPIVLLAGGLDRGNEFDDLIPYFKNVKAIVTFGQTAPKLVRAAEKAGLDIIESVDTLDEAVVKAYAHSKDGDVVLLSPACASWDQFKTFEERGDIFIQAVHKLI.

119–125 (GSNGKTT) contacts ATP.

The protein belongs to the MurCDEF family.

It is found in the cytoplasm. The enzyme catalyses UDP-N-acetyl-alpha-D-muramoyl-L-alanine + D-glutamate + ATP = UDP-N-acetyl-alpha-D-muramoyl-L-alanyl-D-glutamate + ADP + phosphate + H(+). The protein operates within cell wall biogenesis; peptidoglycan biosynthesis. Functionally, cell wall formation. Catalyzes the addition of glutamate to the nucleotide precursor UDP-N-acetylmuramoyl-L-alanine (UMA). This chain is UDP-N-acetylmuramoylalanine--D-glutamate ligase, found in Bacillus cereus (strain B4264).